The chain runs to 291 residues: Elongation factor Ts, mitochondrial (291 aa).

It belongs to the EF-Ts family.

It localises to the mitochondrion. Associates with the EF-Tu.GDP complex and induces the exchange of GDP to GTP. It remains bound to the aminoacyl-tRNA.EF-Tu.GTP complex up to the GTP hydrolysis stage on the ribosome. This Nematostella vectensis (Starlet sea anemone) protein is Elongation factor Ts, mitochondrial.